The primary structure comprises 389 residues: MQDINSGSSSMKDTYSSWIEISKRSLSNNLDNFRSILRPNSTLTAILKSNAYGHGIEPMTRLCIEAGISRIGVNSIEEALLIRNIDSKIPILIMGEIQNPEKRKDVLSDPNFWIVFSRPETARILSSFLPAPKLHLKIDTGMGRLGSHGETLKQTLSELKNVGITLGGICTHFASTEDVLEHKYSLMQTQKFEEAIFLAKSFGYNHLIRHACASASTMLFPNAHFDMVRIGISLYGLWPSIQTRLSLNLTGNKNFQLNPILSWKSRIVHIQYHPADSYIGYGSTFQTSYPTKVAIVPVGYYEGLDRKLSSNGDMLVLGKKARIIGRICMNMTMLDVTHIPGAEVGSIVTIIGQDGEESITADDLADRTHTINYEVMTRISESIPRIVVD.

The Proton acceptor; specific for D-alanine role is filled by Lys48. At Lys48 the chain carries N6-(pyridoxal phosphate)lysine. A substrate-binding site is contributed by Arg144. The active-site Proton acceptor; specific for L-alanine is Tyr281. Residue Met329 participates in substrate binding.

This sequence belongs to the alanine racemase family. The cofactor is pyridoxal 5'-phosphate.

The enzyme catalyses L-alanine = D-alanine. The protein operates within amino-acid biosynthesis; D-alanine biosynthesis; D-alanine from L-alanine: step 1/1. Functionally, catalyzes the interconversion of L-alanine and D-alanine. May also act on other amino acids. This Leptospira interrogans serogroup Icterohaemorrhagiae serovar Lai (strain 56601) protein is Alanine racemase (alr).